The primary structure comprises 717 residues: Polyribonucleotide nucleotidyltransferase (717 aa).

Mg(2+) contacts are provided by Asp486 and Asp492. The KH domain maps to Pro553–Ile612. Residues Gly622 to Val715 form the S1 motif domain. The segment at Ser650–Thr683 is disordered. Positions Lys654–His665 are enriched in basic and acidic residues. A compositionally biased stretch (basic residues) spans Ser666–Arg675.

It belongs to the polyribonucleotide nucleotidyltransferase family. Mg(2+) is required as a cofactor.

The protein resides in the cytoplasm. It catalyses the reaction RNA(n+1) + phosphate = RNA(n) + a ribonucleoside 5'-diphosphate. Involved in mRNA degradation. Catalyzes the phosphorolysis of single-stranded polyribonucleotides processively in the 3'- to 5'-direction. In Borrelia turicatae (strain 91E135), this protein is Polyribonucleotide nucleotidyltransferase.